Here is a 238-residue protein sequence, read N- to C-terminus: Purine nucleoside phosphorylase DeoD-type (238 aa).

Position 4 (His4) interacts with a purine D-ribonucleoside. Phosphate is bound by residues Gly20, Arg24, Arg43, and 87-90; that span reads RVGS. A purine D-ribonucleoside contacts are provided by residues 179 to 181 and 203 to 204; these read EME and SD. Asp204 (proton donor) is an active-site residue.

It belongs to the PNP/UDP phosphorylase family. Homohexamer; trimer of homodimers.

It carries out the reaction a purine D-ribonucleoside + phosphate = a purine nucleobase + alpha-D-ribose 1-phosphate. The catalysed reaction is a purine 2'-deoxy-D-ribonucleoside + phosphate = a purine nucleobase + 2-deoxy-alpha-D-ribose 1-phosphate. Catalyzes the reversible phosphorolytic breakdown of the N-glycosidic bond in the beta-(deoxy)ribonucleoside molecules, with the formation of the corresponding free purine bases and pentose-1-phosphate. The protein is Purine nucleoside phosphorylase DeoD-type of Haemophilus influenzae (strain 86-028NP).